The chain runs to 23 residues: Malate dehydrogenase (23 aa).

Residue Asn-7 coordinates NAD(+). Residue Arg-23 coordinates substrate.

Belongs to the LDH/MDH superfamily. MDH type 1 family. As to quaternary structure, homodimer.

It catalyses the reaction (S)-malate + NAD(+) = oxaloacetate + NADH + H(+). This Pseudotsuga menziesii (Douglas-fir) protein is Malate dehydrogenase.